The chain runs to 36 residues: Beta-amanitin proprotein (36 aa).

Residues 1–10 (MSDINATRLP) constitute a propeptide that is removed on maturation. A cross-link (cyclopeptide (Ile-Pro)) is located at residues 11-18 (IWGIGCDP). Residues 12 to 16 (WGIGC) constitute a cross-link (2'-cysteinyl-6'-hydroxytryptophan sulfoxide (Trp-Cys)). Residues 19-36 (CIGDDVTALLTRGEASLC) constitute a propeptide that is removed on maturation.

This sequence belongs to the MSDIN fungal toxin family. Post-translationally, processed by the macrocyclase-peptidase enzyme POPB to yield a toxic cyclic decapeptide. POPB first removes 10 residues from the N-terminus. Conformational trapping of the remaining peptide forces the enzyme to release this intermediate rather than proceed to macrocyclization. The enzyme rebinds the remaining peptide in a different conformation and catalyzes macrocyclization of the N-terminal 8 residues.

Functionally, toxin belonging to the bicyclic octapeptides amatoxins that acts by binding non-competitively to RNA polymerase II and greatly slowing the elongation of transcripts from target promoters. In Amanita phalloides (Death cap), this protein is Beta-amanitin proprotein.